A 1356-amino-acid chain; its full sequence is Pleckstrin homology domain-containing family H member 1 (1356 aa).

The stretch at 27–172 (FRLQASKIRE…QDALEDLRMT (146 aa)) forms a coiled coil. 3 disordered regions span residues 179–203 (VVPE…EQDS), 256–314 (HLQK…PKVR), and 354–414 (LHSP…PPLH). Composition is skewed to polar residues over residues 194–203 (PSDQPVEQDS), 256–265 (HLQKEGSPSQ), and 285–297 (VTAQ…GTKT). Positions 359–407 (SSKSEARAKVREEAEKMEMEALPPSGKQEERESLKSRRGELEDVELENK) form a coiled coil. Composition is skewed to basic and acidic residues over residues 362–377 (SEAR…KMEM) and 385–399 (KQEE…RGEL). Ser451 is subject to Phosphoserine. 2 consecutive PH domains span residues 572 to 666 (ALEK…SLLK) and 681 to 790 (KPTV…VAAG). Residue Ser739 is modified to Phosphoserine. Positions 826 to 980 (YSQEGLCASL…PSRMEVVSIL (155 aa)) constitute a MyTH4 domain. In terms of domain architecture, FERM spans 991–1327 (FSIPVHFANG…NHCSATVNLS (337 aa)).

This Mus musculus (Mouse) protein is Pleckstrin homology domain-containing family H member 1 (Plekhh1).